A 229-amino-acid polypeptide reads, in one-letter code: Enolase-phosphatase E1 (229 aa).

The protein belongs to the HAD-like hydrolase superfamily. MasA/MtnC family. As to quaternary structure, monomer. It depends on Mg(2+) as a cofactor.

The catalysed reaction is 5-methylsulfanyl-2,3-dioxopentyl phosphate + H2O = 1,2-dihydroxy-5-(methylsulfanyl)pent-1-en-3-one + phosphate. Its pathway is amino-acid biosynthesis; L-methionine biosynthesis via salvage pathway; L-methionine from S-methyl-5-thio-alpha-D-ribose 1-phosphate: step 3/6. It functions in the pathway amino-acid biosynthesis; L-methionine biosynthesis via salvage pathway; L-methionine from S-methyl-5-thio-alpha-D-ribose 1-phosphate: step 4/6. Bifunctional enzyme that catalyzes the enolization of 2,3-diketo-5-methylthiopentyl-1-phosphate (DK-MTP-1-P) into the intermediate 2-hydroxy-3-keto-5-methylthiopentenyl-1-phosphate (HK-MTPenyl-1-P), which is then dephosphorylated to form the acireductone 1,2-dihydroxy-3-keto-5-methylthiopentene (DHK-MTPene). This chain is Enolase-phosphatase E1, found in Pectobacterium carotovorum subsp. carotovorum (strain PC1).